A 273-amino-acid chain; its full sequence is Bis(5'-nucleosyl)-tetraphosphatase, symmetrical (273 aa).

This sequence belongs to the Ap4A hydrolase family.

It carries out the reaction P(1),P(4)-bis(5'-adenosyl) tetraphosphate + H2O = 2 ADP + 2 H(+). Its function is as follows. Hydrolyzes diadenosine 5',5'''-P1,P4-tetraphosphate to yield ADP. The chain is Bis(5'-nucleosyl)-tetraphosphatase, symmetrical from Proteus mirabilis (strain HI4320).